The chain runs to 380 residues: Queuine tRNA-ribosyltransferase (380 aa).

Residue Asp-93 is the Proton acceptor of the active site. Substrate contacts are provided by residues 93–97 (DSGGF), Asp-147, Gln-198, and Gly-225. The RNA binding stretch occupies residues 256 to 262 (GVGLPSN). Asp-275 functions as the Nucleophile in the catalytic mechanism. Residues 280–284 (ARNGR) form an RNA binding; important for wobble base 34 recognition region. Zn(2+)-binding residues include Cys-313, Cys-315, Cys-318, and His-344.

It belongs to the queuine tRNA-ribosyltransferase family. Homodimer. Within each dimer, one monomer is responsible for RNA recognition and catalysis, while the other monomer binds to the replacement base PreQ1. Zn(2+) is required as a cofactor.

It catalyses the reaction 7-aminomethyl-7-carbaguanine + guanosine(34) in tRNA = 7-aminomethyl-7-carbaguanosine(34) in tRNA + guanine. The protein operates within tRNA modification; tRNA-queuosine biosynthesis. Functionally, catalyzes the base-exchange of a guanine (G) residue with the queuine precursor 7-aminomethyl-7-deazaguanine (PreQ1) at position 34 (anticodon wobble position) in tRNAs with GU(N) anticodons (tRNA-Asp, -Asn, -His and -Tyr). Catalysis occurs through a double-displacement mechanism. The nucleophile active site attacks the C1' of nucleotide 34 to detach the guanine base from the RNA, forming a covalent enzyme-RNA intermediate. The proton acceptor active site deprotonates the incoming PreQ1, allowing a nucleophilic attack on the C1' of the ribose to form the product. After dissociation, two additional enzymatic reactions on the tRNA convert PreQ1 to queuine (Q), resulting in the hypermodified nucleoside queuosine (7-(((4,5-cis-dihydroxy-2-cyclopenten-1-yl)amino)methyl)-7-deazaguanosine). The chain is Queuine tRNA-ribosyltransferase from Clostridium perfringens (strain 13 / Type A).